A 774-amino-acid polypeptide reads, in one-letter code: Lysyl oxidase homolog 2 (774 aa).

Positions 1-25 (MERPLCSHLCSCLAVLALLSPLSLA) are cleaved as a signal peptide. SRCR domains follow at residues 58 to 159 (LRLA…VVCS), 188 to 302 (IRAI…VSCV), 326 to 425 (VRLR…VRCN), and 435 to 544 (LRLN…VACS). 9 cysteine pairs are disulfide-bonded: C84-C148, C97-C158, C128-C138, C218-C291, C231-C301, C265-C275, C351-C414, C364-C424, and C395-C405. The N-linked (GlcNAc...) asparagine glycan is linked to N288. The N-linked (GlcNAc...) asparagine glycan is linked to N455. Disulfide bonds link C464–C530, C477–C543, and C511–C521. Residues 548-751 (PDLVLNAEMV…WMYNCHIGGS (204 aa)) form a lysyl-oxidase like region. Positions 549 and 550 each coordinate Ca(2+). 4 disulfide bridges follow: C573–C625, C579–C695, C657–C673, and C663–C685. Cu cation is bound by residues H626, H628, and H630. The N-linked (GlcNAc...) asparagine glycan is linked to N644. The segment at residues 653-689 (KASFCLEDTECEGDIQKNYECANFGDQGITMGCWDMY) is a cross-link (lysine tyrosylquinone (Lys-Tyr)). At Y689 the chain carries 2',4',5'-topaquinone. E722, D724, N727, and N728 together coordinate Ca(2+). An intrachain disulfide couples C732 to C746.

Belongs to the lysyl oxidase family. As to quaternary structure, component of some chromatin repressor complex. Interacts with SNAI1. Interacts with TAF10. Interacts with HSPA5. Interacts with EFEMP2. It depends on Cu cation as a cofactor. Lysine tyrosylquinone residue is required as a cofactor. In terms of processing, the lysine tyrosylquinone cross-link (LTQ) is generated by condensation of the epsilon-amino group of a lysine with a topaquinone produced by oxidation of tyrosine. N-glycosylated. N-glycosylation on Asn-455 and Asn-644 may be essential for proper folding and secretion; may be composed of a fucosylated carbohydrates attached to a trimannose N-linked glycan core.

Its subcellular location is the secreted. The protein localises to the extracellular space. It localises to the extracellular matrix. It is found in the basement membrane. The protein resides in the nucleus. Its subcellular location is the chromosome. The protein localises to the endoplasmic reticulum. The enzyme catalyses L-lysyl-[protein] + O2 + H2O = (S)-2-amino-6-oxohexanoyl-[protein] + H2O2 + NH4(+). Its activity is regulated as follows. Specifically inhibited by a mouse monoclonal antibody AB0023, inhibition occurs in a non-competitive manner. Mediates the post-translational oxidative deamination of lysine residues on target proteins leading to the formation of deaminated lysine (allysine). Acts as a transcription corepressor and specifically mediates deamination of trimethylated 'Lys-4' of histone H3 (H3K4me3), a specific tag for epigenetic transcriptional activation. Shows no activity against histone H3 when it is trimethylated on 'Lys-9' (H3K9me3) or 'Lys-27' (H3K27me3) or when 'Lys-4' is monomethylated (H3K4me1) or dimethylated (H3K4me2). Also mediates deamination of methylated TAF10, a member of the transcription factor IID (TFIID) complex, which induces release of TAF10 from promoters, leading to inhibition of TFIID-dependent transcription. LOXL2-mediated deamination of TAF10 results in transcriptional repression of genes required for embryonic stem cell pluripotency including POU5F1/OCT4, NANOG, KLF4 and SOX2. Involved in epithelial to mesenchymal transition (EMT) via interaction with SNAI1 and participates in repression of E-cadherin CDH1, probably by mediating deamination of histone H3. During EMT, involved with SNAI1 in negatively regulating pericentromeric heterochromatin transcription. SNAI1 recruits LOXL2 to pericentromeric regions to oxidize histone H3 and repress transcription which leads to release of heterochromatin component CBX5/HP1A, enabling chromatin reorganization and acquisition of mesenchymal traits. Interacts with the endoplasmic reticulum protein HSPA5 which activates the IRE1-XBP1 pathway of the unfolded protein response, leading to expression of several transcription factors involved in EMT and subsequent EMT induction. When secreted into the extracellular matrix, promotes cross-linking of extracellular matrix proteins by mediating oxidative deamination of peptidyl lysine residues in precursors to fibrous collagen and elastin. Acts as a regulator of sprouting angiogenesis, probably via collagen IV scaffolding. Acts as a regulator of chondrocyte differentiation, probably by regulating expression of factors that control chondrocyte differentiation. The chain is Lysyl oxidase homolog 2 (LOXL2) from Pongo abelii (Sumatran orangutan).